A 455-amino-acid chain; its full sequence is uncharacterized protein (455 aa).

An N-terminal signal peptide occupies residues Met1–Cys27. The Extracellular segment spans residues Glu29 to Ser434. N-linked (GlcNAc...) asparagine glycans are attached at residues Asn136, Asn148, Asn210, and Asn298. Positions Ser383 to Thr402 are disordered. 2 N-linked (GlcNAc...) asparagine glycosylation sites follow: Asn421 and Asn432. A helical transmembrane segment spans residues Ser435–Phe455.

It localises to the membrane. This is an uncharacterized protein from Dictyostelium discoideum (Social amoeba).